A 544-amino-acid polypeptide reads, in one-letter code: Probable protein kinase UbiB (544 aa).

Residues 123-505 (EFDEQALASA…GRQKSHNVRS (383 aa)) enclose the Protein kinase domain. ATP-binding positions include 129 to 137 (LASASIAQV) and Lys156. The Proton acceptor role is filled by Asp291. A helical transmembrane segment spans residues 522–540 (LPLWLSCGTLVTVLLVLLL).

It belongs to the ABC1 family. UbiB subfamily.

It localises to the cell inner membrane. It functions in the pathway cofactor biosynthesis; ubiquinone biosynthesis [regulation]. Functionally, is probably a protein kinase regulator of UbiI activity which is involved in aerobic coenzyme Q (ubiquinone) biosynthesis. The protein is Probable protein kinase UbiB of Actinobacillus pleuropneumoniae serotype 7 (strain AP76).